The following is a 211-amino-acid chain: Metalloproteinase inhibitor 3 (211 aa).

The N-terminal stretch at 1–23 (MTPWLGLVVLLGSWSLGDWGAEA) is a signal peptide. Cysteine 24 serves as a coordination point for Zn(2+). 2 involved in metalloproteinase-binding regions span residues 24–27 (CTCS) and 88–89 (ES). 6 disulfides stabilise this stretch: cysteine 24–cysteine 91, cysteine 26–cysteine 118, cysteine 36–cysteine 143, cysteine 145–cysteine 192, cysteine 150–cysteine 155, and cysteine 163–cysteine 184. One can recognise an NTR domain in the interval 24-143 (CTCSPSHPQD…GLNYRYHLGC (120 aa)). The segment at 105 to 188 (TGRVYDGKMY…SKHYACIRQK (84 aa)) is mediates interaction with EFEMP1. An N-linked (GlcNAc...) asparagine glycan is attached at asparagine 207.

This sequence belongs to the protease inhibitor I35 (TIMP) family. Interacts with EFEMP1. Interacts with KDR.

It localises to the secreted. It is found in the extracellular space. Its subcellular location is the extracellular matrix. Its function is as follows. Mediates a variety of processes including matrix regulation and turnover, inflammation, and angiogenesis, through reversible inhibition of zinc protease superfamily enzymes, primarily matrix metalloproteinases (MMPs). Regulates extracellular matrix (ECM) remodeling through inhibition of matrix metalloproteinases (MMP) including MMP-1, MMP-2, MMP-3, MMP-7, MMP-9, MMP-13, MMP-14 and MMP-15. Additionally, modulates the processing of amyloid precursor protein (APP) and apolipoprotein E receptor ApoER2 by inhibiting two alpha-secretases ADAM10 and ADAM17. Functions as a tumor suppressor and a potent inhibitor of angiogenesis. Exerts its anti-angiogenic effect by directly interacting with vascular endothelial growth factor (VEGF) receptor-2/KDR, preventing its binding to the VEGFA ligand. Selectively induces apoptosis in angiogenic endothelial cells through a caspase-independent cell death pathway. Mechanistically, inhibits matrix-induced focal adhesion kinase PTK2 tyrosine phosphorylation and association with paxillin/PXN and disrupts the incorporation of ITGB3, PTK2 and PXN into focal adhesion contacts on the matrix. This Bos taurus (Bovine) protein is Metalloproteinase inhibitor 3 (TIMP3).